We begin with the raw amino-acid sequence, 205 residues long: uncharacterized protein (205 aa).

The next 3 membrane-spanning stretches (helical) occupy residues 45–65 (LFFY…FLVI), 119–139 (VFWL…VTAF), and 144–164 (FEWM…LWGY).

It belongs to the TVP23 family.

It localises to the membrane. This is an uncharacterized protein from Caenorhabditis elegans.